We begin with the raw amino-acid sequence, 644 residues long: Macrolide export ATP-binding/permease protein MacB (644 aa).

Residues 4 to 242 (IECKNINRYF…SNVGRIQEKA (239 aa)) form the ABC transporter domain. 40–47 (GQSGSGKS) provides a ligand contact to ATP. Transmembrane regions (helical) follow at residues 270–290 (LLTMLGIIIGIASVVSVVALG), 524–544 (IALISLVVGGIGVMNIMLVSV), 574–594 (LICVIGGLVGVGLSAAVSLVF), and 607–627 (AMSVIGAVACSTGIGIAFGFM).

It belongs to the ABC transporter superfamily. Macrolide exporter (TC 3.A.1.122) family. In terms of assembly, homodimer.

Its subcellular location is the cell inner membrane. Non-canonical ABC transporter that contains transmembrane domains (TMD), which form a pore in the inner membrane, and an ATP-binding domain (NBD), which is responsible for energy generation. Confers resistance against macrolides. The sequence is that of Macrolide export ATP-binding/permease protein MacB from Neisseria meningitidis serogroup A / serotype 4A (strain DSM 15465 / Z2491).